The following is a 448-amino-acid chain: Protease Do-like 8, chloroplastic (448 aa).

The interval 152-333 (EGNGSGVVWD…IPSSTVLKIV (182 aa)) is serine protease. Catalysis depends on charge relay system residues histidine 171, aspartate 214, and serine 292. The PDZ domain occupies 336 to 433 (LIQFSKVLRA…DKVTLKIKRG (98 aa)).

This sequence belongs to the peptidase S1C family.

The protein resides in the plastid. The protein localises to the chloroplast thylakoid lumen. In terms of biological role, probable serine protease. This Arabidopsis thaliana (Mouse-ear cress) protein is Protease Do-like 8, chloroplastic (DEGP8).